The sequence spans 517 residues: DNA-binding protein (517 aa).

Residues 1–10 (MASRGGNQSS) are compositionally biased toward polar residues. Residues 1–110 (MASRGGNQSS…DISQDSEEER (110 aa)) are disordered. Over residues 64–80 (VLVSETSRSSLSPERSN) the composition is skewed to low complexity. The span at 87–96 (PKKKPRKTKH) shows a compositional bias: basic residues. Position 180 is a phosphotyrosine; by host (Tyr-180). Cys-269 and His-271 together coordinate Zn(2+). Residues 282–316 (IEMDVASENGQRAMKENPDRAKITQNRWGRNVVQL) form a flexible loop region. Cys-324, Cys-340, Cys-382, Cys-384, Cys-436, and Cys-453 together coordinate Zn(2+). The tract at residues 501 to 517 (VSLPAGHYDSRQNPFDF) is C-terminal arm, DBP binding.

Belongs to the adenoviridae E2A DNA-binding protein family. In terms of assembly, homomultimerizes on viral ssDNA bound to pTP. Forms a initiation complex with viral polymerase, pTP and hosts NFIA and POU2F1/OCT1. Interacts with host SRCAP.

It is found in the host nucleus. In terms of biological role, plays a role in the elongation phase of viral strand displacement replication by unwinding the template in an ATP-independent fashion, employing its capacity to form multimers. Also enhances the rate of initiation. Released from template upon second strand synthesis. Assembles in complex with viral pTP, viral pol, host NFIA and host POU2F1/OCT1 on viral origin of replication. Covers the whole ssDNA genome during synthesis. The complementary strand synthesis induces its relese from DNA template. May inhibit cellular transcription mediated by the interaction between host SRCAP and CBP. This chain is DNA-binding protein, found in Human adenovirus B serotype 7 (HAdV-7).